The following is a 554-amino-acid chain: MAYYRNPSDVTALPAWQALSKHRQSMQNFSMREAFNSDPQRFSQFTLSSAGLFLDYSKNLITTETRDLLVSLAGEVNLKDAIKAQYDGELVNSSEGRPALHTALRRPVGDKLKVNGVDVMPDVHRVLNQMTELVGRIHDGLWRGYTEKPITDVVNIGIGGSFLGPELVSEALVAYAHKGVRCHYLANIDGSEFHELSMKIRAETTLFIVSSKSFNTLETLKNAQAARAWYLAQGGSEVELHRHFIAVSSNNAAAVAFGIREENIFPMWDWVGGRYSLWSAIGLPIALAIGMSNFKELLSGAYTMDQHFQSAPFEQNMPVLLALLGVWYGNFWNAQSHAILPYDHYLRNITKHLQQLDMESNGKSVRQDGTPTSTDTGPVIWGGVGANGQHAYHQLLHQGTQMIPADFIVPIVSFNPVADHHQWLYANCLSQSQALMMGKTRAEAEAELREKGMSEEEVQKLAPHKVIPGNRPSNTLVVERISPRRLGALVAMYEHKVFVQSVIWGTNAFDQWGVELGKEMGKAVYQRLTGGTEEPADDASTQGLINYFRGRHRG.

E359 serves as the catalytic Proton donor. Catalysis depends on residues H390 and K518.

This sequence belongs to the GPI family.

The protein resides in the cytoplasm. It catalyses the reaction alpha-D-glucose 6-phosphate = beta-D-fructose 6-phosphate. It functions in the pathway carbohydrate biosynthesis; gluconeogenesis. Its pathway is carbohydrate degradation; glycolysis; D-glyceraldehyde 3-phosphate and glycerone phosphate from D-glucose: step 2/4. Functionally, catalyzes the reversible isomerization of glucose-6-phosphate to fructose-6-phosphate. The chain is Glucose-6-phosphate isomerase from Pseudomonas savastanoi pv. phaseolicola (strain 1448A / Race 6) (Pseudomonas syringae pv. phaseolicola (strain 1448A / Race 6)).